The primary structure comprises 238 residues: MRPSGRSTSQVRPITITRNFTAHAEGSVLVEFGDTKVICTASVEENVPRWLKGKGQGWVTAEYGMLPRATHTRNRREASSGKQGGRTMEIQRLIARSLRAAVDLEALGEQMITVDCDVIQADGGTRTASITGAMVALVDAVNSMIEKGTLKKSPIKGMVAAVSVGIYKGEAICDLEYLEDSAAETDMNVVMTEEGKMIEIQGTAEGEAFSHEELLAMLALAKDGIADIVTMQKQALES.

Residues R86 and 124–126 each bind phosphate; that span reads GTR.

The protein belongs to the RNase PH family. In terms of assembly, homohexameric ring arranged as a trimer of dimers.

It carries out the reaction tRNA(n+1) + phosphate = tRNA(n) + a ribonucleoside 5'-diphosphate. In terms of biological role, phosphorolytic 3'-5' exoribonuclease that plays an important role in tRNA 3'-end maturation. Removes nucleotide residues following the 3'-CCA terminus of tRNAs; can also add nucleotides to the ends of RNA molecules by using nucleoside diphosphates as substrates, but this may not be physiologically important. Probably plays a role in initiation of 16S rRNA degradation (leading to ribosome degradation) during starvation. The protein is Ribonuclease PH of Photobacterium profundum (strain SS9).